Here is a 236-residue protein sequence, read N- to C-terminus: Phosphoribosylaminoimidazole-succinocarboxamide synthase (236 aa).

It belongs to the SAICAR synthetase family.

It catalyses the reaction 5-amino-1-(5-phospho-D-ribosyl)imidazole-4-carboxylate + L-aspartate + ATP = (2S)-2-[5-amino-1-(5-phospho-beta-D-ribosyl)imidazole-4-carboxamido]succinate + ADP + phosphate + 2 H(+). It functions in the pathway purine metabolism; IMP biosynthesis via de novo pathway; 5-amino-1-(5-phospho-D-ribosyl)imidazole-4-carboxamide from 5-amino-1-(5-phospho-D-ribosyl)imidazole-4-carboxylate: step 1/2. The chain is Phosphoribosylaminoimidazole-succinocarboxamide synthase from Pseudomonas entomophila (strain L48).